Here is a 110-residue protein sequence, read N- to C-terminus: Inner kinetochore subunit mhf1 (110 aa).

This sequence belongs to the TAF9 family. CENP-S/MHF1 subfamily. As to quaternary structure, the MHF histone-fold complex is a heterotetramer of 2 mhf1-mhf2 heterodimers. Component of the inner kinetochore constitutive centromere-associated network (CCAN) (also known as central kinetochore Sim4 complex in fission yeast), which is composed of at least cnl2, cnp3, cnp20, fta1, fta2, fta3, fta4, fta6, fta7, mal2, mhf1, mhf2, mis6, mis15, mis17, sim4 and wip1.

The protein localises to the nucleus. Functionally, component of a FANCM-MHF complex that promotes gene conversion at blocked replication forks, probably by reversal of the stalled fork. FANCM-MHF promotes non-crossover recombination. The polypeptide is Inner kinetochore subunit mhf1 (Schizosaccharomyces pombe (strain 972 / ATCC 24843) (Fission yeast)).